Here is a 608-residue protein sequence, read N- to C-terminus: Prolactin receptor (608 aa).

The first 19 residues, 1-19, serve as a signal peptide directing secretion; the sequence is MSSALAYMLLVLSISLLNG. The Extracellular portion of the chain corresponds to 20 to 229; that stretch reads QSPPGKPEIH…EIPNDFTLKD (210 aa). 2 Fibronectin type-III domains span residues 22 to 122 and 124 to 224; these read PPGK…IVEP and PPRN…IPND. Cys31 and Cys41 are disulfide-bonded. N-linked (GlcNAc...) asparagine glycosylation is present at Asn54. Cys70 and Cys81 are disulfide-bonded. N-linked (GlcNAc...) asparagine glycosylation is found at Asn99 and Asn127. Residues Asp206 and His207 each contribute to the Zn(2+) site. The WSXWS motif motif lies at 210 to 214; that stretch reads WSRWG. A helical membrane pass occupies residues 230 to 253; it reads TTVWIIVAVLSAVICLIMVWAVAL. The Cytoplasmic segment spans residues 254-608; that stretch reads KGYSMMTCIF…DPTCFMHSFH (355 aa). The Box 1 motif signature appears at 262–270; it reads IFPPVPGPK. Disordered stretches follow at residues 317 to 355, 377 to 419, and 466 to 487; these read DERL…HSLL, KPEN…TRRS, and GAKS…EKGP. Positions 318–327 are enriched in basic and acidic residues; sequence ERLMPSHSKE. Positions 345 to 354 are enriched in low complexity; the sequence is GHGSYDSHSL. The span at 398–408 shows a compositional bias: polar residues; sequence CHTDTSKSTTW.

It belongs to the type I cytokine receptor family. Type 1 subfamily. In terms of assembly, interacts with SMARCA1. Interacts with NEK3 and VAV2 and this interaction is prolactin-dependent.

Its subcellular location is the membrane. Its function is as follows. This is a receptor for the anterior pituitary hormone prolactin. In Mus musculus (Mouse), this protein is Prolactin receptor (Prlr).